Here is a 428-residue protein sequence, read N- to C-terminus: Ammonium transporter AmtB (428 aa).

An N-terminal signal peptide occupies residues 1 to 22 (MKIATIKTGLASLAMLPGLVMA). The Periplasmic portion of the chain corresponds to 23–32 (APAVADKADN). A helical membrane pass occupies residues 33–54 (AFMMICTALVLFMTIPGIALFY). Over 55–65 (GGLIRGKNVLS) the chain is Cytoplasmic. A helical membrane pass occupies residues 66–90 (MLTQVTVTFALVCILWVVYGYSLAF). The Periplasmic portion of the chain corresponds to 91 to 119 (GEGNNFFGNINWLMLKNIELTAVMGSIYQ). The helical transmembrane segment at 120 to 142 (YIHVAFQGSFACITVGLIVGALA) threads the bilayer. The Cytoplasmic segment spans residues 143 to 146 (ERIR). Residues 147–171 (FSAVLIFVVVWLTLSYIPIAHMVWG) form a helical membrane-spanning segment. Residues 172 to 185 (GGLLASHGALDFAG) are Periplasmic-facing. A helical transmembrane segment spans residues 186-201 (GTVVHINAAIAGLVGA). The Cytoplasmic segment spans residues 202 to 221 (YLIGKRVGFGKEAFKPHNLP). The chain crosses the membrane as a helical span at residues 222–241 (MVFTGTAILYIGWFGFNAGS). Ser-241 is an NH4(+) binding site. Residues 242 to 248 (AGTANEI) are Periplasmic-facing. Residues 249 to 273 (AALAFVNTVVATAAAILGWIFGEWA) form a helical membrane-spanning segment. Topologically, residues 274–279 (LRGKPS) are cytoplasmic. Residues 280-300 (LLGACSGAIAGLVGVTPACGY) traverse the membrane as a helical segment. At 301–302 (IG) the chain is on the periplasmic side. The helical transmembrane segment at 303 to 321 (VGGALIIGVVAGLAGLWGV) threads the bilayer. Residues 322 to 333 (TMLKRLLRVDDP) lie on the Cytoplasmic side of the membrane. A helical membrane pass occupies residues 334–355 (CDVFGVHGVCGIVGCIMTGIFA). Residues 356 to 370 (ASSLGGVGFAEGVTM) lie on the Periplasmic side of the membrane. Residues 371 to 399 (GHQLLVQLESIAITIVWSGVVAFIGYKLA) form a helical membrane-spanning segment. The Cytoplasmic segment spans residues 400–428 (DLTVGLRVPEEQEREGLDVNSHGENAYNA).

Belongs to the ammonia transporter channel (TC 1.A.11.2) family. As to quaternary structure, homotrimer. In response to elevation of the extracellular ammonium concentration, interacts and forms a complex with GlnK.

The protein localises to the cell inner membrane. Its activity is regulated as follows. In the presence of high extracellular ammonium concentrations, transport activity is inhibited by interaction with the regulatory protein GlnK. Formation of the GlnK-AmtB complex is influenced by intracellular pools of the effector molecules ATP, ADP, Mg(2+) and 2-oxoglutarate. The GlnK-AmtB interaction is also controlled by the level of intracellular glutamine and the uridylylation status of GlnK. Involved in the uptake of ammonium/ammonia (NH(4)(+)/NH(3)). Transport is electrogenic. Following sequestration of NH(4)(+) at the periplasmic face, NH(4)(+) is deprotonated and neutral NH(3) is transported into the cytoplasm. Neutral NH(3) and charged H(+) are carried separately across the membrane on a unique two-lane pathway, before recombining to NH(4)(+) inside the cell. The polypeptide is Ammonium transporter AmtB (amtB) (Escherichia coli O157:H7).